Consider the following 338-residue polypeptide: Anthranilate phosphoribosyltransferase (338 aa).

5-phospho-alpha-D-ribose 1-diphosphate-binding positions include G81, 84–85 (GD), S89, 91–94 (NVST), 109–117 (KHGNRALSS), and A121. G81 lines the anthranilate pocket. Residue S93 coordinates Mg(2+). N112 serves as a coordination point for anthranilate. Residue R167 coordinates anthranilate. The Mg(2+) site is built by D226 and E227.

It belongs to the anthranilate phosphoribosyltransferase family. As to quaternary structure, homodimer. Mg(2+) serves as cofactor.

It catalyses the reaction N-(5-phospho-beta-D-ribosyl)anthranilate + diphosphate = 5-phospho-alpha-D-ribose 1-diphosphate + anthranilate. It functions in the pathway amino-acid biosynthesis; L-tryptophan biosynthesis; L-tryptophan from chorismate: step 2/5. In terms of biological role, catalyzes the transfer of the phosphoribosyl group of 5-phosphorylribose-1-pyrophosphate (PRPP) to anthranilate to yield N-(5'-phosphoribosyl)-anthranilate (PRA). This Rhodopseudomonas palustris (strain ATCC BAA-98 / CGA009) protein is Anthranilate phosphoribosyltransferase.